Reading from the N-terminus, the 1703-residue chain is Arf-GAP with Rho-GAP domain, ANK repeat and PH domain-containing protein 2 (1703 aa).

One can recognise an SAM domain in the interval 6–70; sequence EVNADIRDFL…LKQLQMIFSK (65 aa). At Tyr77 the chain carries Phosphotyrosine. Disordered regions lie at residues 84–132, 191–232, and 286–319; these read KNGS…LSEG, EEHT…NGTN, and PVPEIPGSTKSIPGSYFRDRRSNTTSAGKSLTLK. 3 stretches are compositionally biased toward polar residues: residues 85-103, 123-132, and 197-214; these read NGSTTKEQQHSDPSSSTHT, MVTTSTLSEG, and GNLTSEDSSKALSTNTEC. Over residues 222–232 the composition is skewed to low complexity; it reads TSGTHSGNGTN. Positions 308-319 are enriched in polar residues; the sequence is NTTSAGKSLTLK. PH domains lie at 480 to 572 and 585 to 677; these read AKEK…SALK and APEK…QSIA. An Arf-GAP domain is found at 674-809; that stretch reads QSIAETLSDY…TLLASLTKEE (136 aa). The C4-type zinc-finger motif lies at 698–721; sequence CADCKAPDPDWASINLCVVICKKC. PH domains lie at 899–1001 and 1012–1110; these read QTAA…KRFV and DYDL…KAAG. The Rho-GAP domain occupies 1114–1295; the sequence is NALQDQQLCK…DLINNYVEIF (182 aa). The region spanning 1324 to 1418 is the Ras-associating domain; the sequence is GDLLIEVFVE…AYLVVKRFLT (95 aa). The PH 5 domain maps to 1428–1531; sequence KSIKEGILKL…WMASIFIAQH (104 aa). Ser1627 carries the post-translational modification Phosphoserine. Disordered regions lie at residues 1633-1670 and 1684-1703; these read DTEAEGPHGLPKAYKGPKTLKKTEERNSKATLDADPKL and RSRPLHKELPDEQTLQKEVK. Composition is skewed to basic and acidic residues over residues 1653–1670 and 1688–1703; these read KKTEERNSKATLDADPKL and LHKELPDEQTLQKEVK.

It is found in the cytoplasm. Functionally, phosphatidylinositol 3,4,5-trisphosphate-dependent GTPase-activating protein that modulates actin cytoskeleton remodeling by regulating ARF and RHO family members. Is activated by phosphatidylinositol 3,4,5-trisphosphate (PtdIns(3,4,5)P3) binding. Can be activated by phosphatidylinositol 3,4-bisphosphate (PtdIns(3,4,5)P2) binding, albeit with lower efficiency. This chain is Arf-GAP with Rho-GAP domain, ANK repeat and PH domain-containing protein 2 (Arap2), found in Mus musculus (Mouse).